Reading from the N-terminus, the 203-residue chain is EF-hand calcium-binding domain-containing protein 8 (203 aa).

The tract at residues 61 to 107 is disordered; the sequence is SSEKPGESPKPQKMAQPGGSQKKETSRSVPVTDPTSHNSEINQRDQQ. Over residues 87 to 107 the composition is skewed to polar residues; it reads RSVPVTDPTSHNSEINQRDQQ. EF-hand domains are found at residues 111–145 and 146–181; these read MHLA…VLSS and MSEE…EFQG.

This Mus musculus (Mouse) protein is EF-hand calcium-binding domain-containing protein 8 (Efcab8).